The chain runs to 540 residues: CUB domain-containing protein 2 (540 aa).

The first 22 residues, 1-22, serve as a signal peptide directing secretion; that stretch reads MLAEWGACLLLAVALLGPGLQA. Residues 23–516 are Extracellular-facing; the sequence is QAMEGVKCGG…VSMVAQDTSD (494 aa). 6 cysteine pairs are disulfide-bonded: C30–C56, C83–C106, C145–C171, C198–C218, C257–C283, and C314–C336. CUB domains follow at residues 30–143, 145–255, and 257–373; these read CGGV…YQKD, CGGV…YFSG, and CQEV…YIGV. The N-linked (GlcNAc...) asparagine glycan is linked to N40. Residue N267 is glycosylated (N-linked (GlcNAc...) asparagine). N377, N435, and N436 each carry an N-linked (GlcNAc...) asparagine glycan. The chain crosses the membrane as a helical span at residues 517–537; it reads IVFLGLCILAGILMVIAIVVL. Residues 538–540 are Cytoplasmic-facing; it reads MLL.

It is found in the membrane. The protein is CUB domain-containing protein 2 (CDCP2) of Homo sapiens (Human).